A 722-amino-acid chain; its full sequence is MAR-binding filament-like protein 1-1 (722 aa).

A disordered region spans residues 1–20 (MGSSCFPQSPLSHSLFSSSS). The transit peptide at 1–50 (MGSSCFPQSPLSHSLFSSSSLSSSQFTPLLFSPRNAQKCKKKMPAMACIH) directs the protein to the chloroplast. Residues 51–84 (SENQKESEFCSRRTILFVGFSVLPLLSLRANAFE) constitute a thylakoid transit peptide. Residues 85–112 (GLSVDSQVKAQPQKEETEQTIQGNAENP) lie on the Lumenal, thylakoid side of the membrane. The helical transmembrane segment at 113 to 133 (FFSLLNGLGVFGSGVLGSLYA) threads the bilayer. Residues 134-722 (LARNEKAVSD…TQPASQQESS (589 aa)) are Stromal-facing. Positions 146–679 (IESMKNKLKE…KGEILRLRTQ (534 aa)) form a coiled coil. The segment at 687–722 (VNNEEKVEAGEKAAVTVKRTRRRKTATQPASQQESS) is disordered. The Nuclear localization signal motif lies at 705–712 (RTRRRKTA).

In terms of assembly, interacts with PTST2; the interaction is essential for the initiation of starch granules biosynthesis in leaf chloroplasts, for the correct location of the process in the stromal spaces between the thylakoid membranes, and for the association of PTST2 with the thylakoid membranes. In terms of processing, predicted to be translocated into the thylakoid by the Tat system.

It localises to the plastid. The protein resides in the chloroplast. It is found in the chloroplast thylakoid membrane. Its subcellular location is the chloroplast stroma. The protein localises to the chloroplast nucleoid. It localises to the nucleus. The protein resides in the nucleus matrix. Its function is as follows. Required for the initiation of starch granules biosynthesis in leaf chloroplasts. Anchored to the thylakoid membranes with its C-terminus facing into the stroma where it is essential for localizing PTST2 and SS4 to the stromal spaces between the thylakoid membranes in order to begin starch granule formation. Associated with leaf chloroplastic nucleoids in vivo. Binds to various chloroplastic double-stranded DNA fragments without particular sequence specificity in vitro. May function at the interface between nucleoids and thylakoids possibly by anchoring nucleoids to the thylakoid membrane system in mature chloroplasts. Likely to participate in nuclear architecture by connecting chromatin with the nuclear matrix and potentially with the nuclear envelope. The chain is MAR-binding filament-like protein 1-1 from Nicotiana tabacum (Common tobacco).